The primary structure comprises 478 residues: Chromosomal replication initiator protein DnaA (478 aa).

The interval 1-71 is domain I, interacts with DnaA modulators; the sequence is MKEFWQTCVS…EALAAEWFQR (71 aa). The segment at 71–140 is domain II; sequence RPVQVAFELP…DAAGVVYERS (70 aa). Positions 141–357 are domain III, AAA+ region; it reads RLNTDLTFDN…GALRKVLAYA (217 aa). Glycine 185, glycine 187, lysine 188, and threonine 189 together coordinate ATP. A domain IV, binds dsDNA region spans residues 358–478; that stretch reads RFHGRDVLSV…LHVLEQTLKG (121 aa).

It belongs to the DnaA family. As to quaternary structure, oligomerizes as a right-handed, spiral filament on DNA at oriC.

It is found in the cytoplasm. Plays an essential role in the initiation and regulation of chromosomal replication. ATP-DnaA binds to the origin of replication (oriC) to initiate formation of the DNA replication initiation complex once per cell cycle. Binds the DnaA box (a 9 base pair repeat at the origin) and separates the double-stranded (ds)DNA. Forms a right-handed helical filament on oriC DNA; dsDNA binds to the exterior of the filament while single-stranded (ss)DNA is stabiized in the filament's interior. The ATP-DnaA-oriC complex binds and stabilizes one strand of the AT-rich DNA unwinding element (DUE), permitting loading of DNA polymerase. After initiation quickly degrades to an ADP-DnaA complex that is not apt for DNA replication. Binds acidic phospholipids. This Bordetella petrii (strain ATCC BAA-461 / DSM 12804 / CCUG 43448) protein is Chromosomal replication initiator protein DnaA.